The following is a 246-amino-acid chain: MLLIPAIDLKDGRCVRLRQGDLDDVTVFSEDPAAIASNWLAQGARRLHLVDLNGAVAGKPKNEAPIKAILKAVGDDIPVQIGGGIRDLDTIERYLDAGISYVIIGTAAVKNPGFLHDACGAFPGQIIVGLDARDGKIATDGWSKLTRHDVLDLAKKFEDYGCEAIIYTDIGRDGMLSGVNVEATVRLAQHVRIPVYASGGIAGMADIEALCAVEADGVEGAILGRSIYEGALDFKVAQARADELTS.

Asp8 (proton acceptor) is an active-site residue. Catalysis depends on Asp131, which acts as the Proton donor.

The protein belongs to the HisA/HisF family.

It is found in the cytoplasm. The catalysed reaction is 1-(5-phospho-beta-D-ribosyl)-5-[(5-phospho-beta-D-ribosylamino)methylideneamino]imidazole-4-carboxamide = 5-[(5-phospho-1-deoxy-D-ribulos-1-ylimino)methylamino]-1-(5-phospho-beta-D-ribosyl)imidazole-4-carboxamide. It functions in the pathway amino-acid biosynthesis; L-histidine biosynthesis; L-histidine from 5-phospho-alpha-D-ribose 1-diphosphate: step 4/9. This is 1-(5-phosphoribosyl)-5-[(5-phosphoribosylamino)methylideneamino] imidazole-4-carboxamide isomerase from Bordetella avium (strain 197N).